The primary structure comprises 172 residues: R-phycocyanin beta chain (172 aa).

Asn-35 and Asp-39 together coordinate (2R,3E)-phycoerythrobilin. (2R,3E)-phycocyanobilin-binding positions include Asn-72, Cys-82, and 84 to 85; that span reads RD. Residue Asn-72 is modified to N4-methylasparagine. (2R,3E)-phycoerythrobilin contacts are provided by residues 149–151 and Cys-153; that span reads PAG.

It belongs to the phycobiliprotein family. In terms of assembly, heterododecamer of 6 alpha and 6 beta chains. The basic functional unit of phycobiliproteins is a ring-shaped hexamer formed from two back-to-back trimers contacting via the alpha chain subunits. The trimers are composed of alpha/beta subunit heterodimers arranged around a three-fold axis of symmetry. The phycoerythrins also contain a gamma subunit which is located in the center of the hexamer. In terms of processing, contains one covalently linked phycocyanobilin chromophore and one covalently linked phycoerythrobilin chromophore.

It is found in the plastid. It localises to the chloroplast thylakoid membrane. Its function is as follows. Light-harvesting photosynthetic tetrapyrrole chromophore-protein from the phycobiliprotein complex (phycobilisome, PBS). Phycocyanin is the major phycobiliprotein in the PBS rod. This chain is R-phycocyanin beta chain (rpcB), found in Polysiphonia urceolata (Red alga).